The following is a 147-amino-acid chain: Transmembrane protein 210 (147 aa).

Positions 1-31 (MAPGPWPVSCLRGGPLGLTYLSLLLIPAAAG) are cleaved as a signal peptide. The Extracellular portion of the chain corresponds to 32–47 (TYCECSLGLSREALIA). The helical transmembrane segment at 48–68 (LLVVLAGISASCFCALVIVAI) threads the bilayer. Over 69–147 (GVLRAKGETC…PPPPPPLPPE (79 aa)) the chain is Cytoplasmic. A disordered region spans residues 128–147 (AIPMEASSEEPPPPPPLPPE). Residues 137-147 (EPPPPPPLPPE) are compositionally biased toward pro residues.

Its subcellular location is the membrane. It localises to the cytoplasmic vesicle. It is found in the secretory vesicle. The protein resides in the acrosome. In Homo sapiens (Human), this protein is Transmembrane protein 210 (TMEM210).